Here is a 477-residue protein sequence, read N- to C-terminus: Ribulose bisphosphate carboxylase large chain (477 aa).

A propeptide spanning residues 1–2 is cleaved from the precursor; sequence MS. At proline 3 the chain carries N-acetylproline. Substrate-binding residues include asparagine 123 and threonine 173. The active-site Proton acceptor is lysine 175. Lysine 177 provides a ligand contact to substrate. Residues lysine 201, aspartate 203, and glutamate 204 each contribute to the Mg(2+) site. Residue lysine 201 is modified to N6-carboxylysine. Catalysis depends on histidine 294, which acts as the Proton acceptor. Residues arginine 295, histidine 327, and serine 379 each contribute to the substrate site.

Belongs to the RuBisCO large chain family. Type I subfamily. In terms of assembly, heterohexadecamer of 8 large chains and 8 small chains; disulfide-linked. The disulfide link is formed within the large subunit homodimers. It depends on Mg(2+) as a cofactor. Post-translationally, the disulfide bond which can form in the large chain dimeric partners within the hexadecamer appears to be associated with oxidative stress and protein turnover.

It is found in the plastid. The protein resides in the chloroplast. It carries out the reaction 2 (2R)-3-phosphoglycerate + 2 H(+) = D-ribulose 1,5-bisphosphate + CO2 + H2O. The enzyme catalyses D-ribulose 1,5-bisphosphate + O2 = 2-phosphoglycolate + (2R)-3-phosphoglycerate + 2 H(+). RuBisCO catalyzes two reactions: the carboxylation of D-ribulose 1,5-bisphosphate, the primary event in carbon dioxide fixation, as well as the oxidative fragmentation of the pentose substrate in the photorespiration process. Both reactions occur simultaneously and in competition at the same active site. The polypeptide is Ribulose bisphosphate carboxylase large chain (Lolium perenne (Perennial ryegrass)).